We begin with the raw amino-acid sequence, 2264 residues long: Protein Ycf2 (2264 aa).

ATP is bound at residue Gly1611 to Ser1618.

It belongs to the Ycf2 family.

Its subcellular location is the plastid. It is found in the chloroplast stroma. Probable ATPase of unknown function. Its presence in a non-photosynthetic plant (Epifagus virginiana) and experiments in tobacco indicate that it has an essential function which is probably not related to photosynthesis. The polypeptide is Protein Ycf2 (Lactuca sativa (Garden lettuce)).